The primary structure comprises 310 residues: HMG box-containing protein C28F2.11 (310 aa).

The segment covering glutamate 69–valine 95 has biased composition (low complexity). The segment at glutamate 69 to asparagine 310 is disordered. Serine 70 is modified (phosphoserine). Threonine 105 is modified (phosphothreonine). Positions proline 117–asparagine 187 form a DNA-binding region, HMG box. Composition is skewed to basic and acidic residues over residues glutamine 131–alanine 178 and valine 200–glutamate 226. 3 positions are modified to phosphoserine: serine 161, serine 214, and serine 215. A phosphothreonine mark is found at threonine 217 and threonine 237. Residues serine 255–proline 268 show a composition bias toward polar residues. Phosphoserine occurs at positions 271, 278, 294, 295, and 297. Threonine 302 and threonine 305 each carry phosphothreonine.

The protein localises to the cytoplasm. This chain is HMG box-containing protein C28F2.11, found in Schizosaccharomyces pombe (strain 972 / ATCC 24843) (Fission yeast).